Reading from the N-terminus, the 321-residue chain is D-alanine--D-alanine ligase (321 aa).

The ATP-grasp domain maps to R121 to K315. Residue P147 to Q199 participates in ATP binding. 3 residues coordinate Mg(2+): E268, E282, and N284.

This sequence belongs to the D-alanine--D-alanine ligase family. The cofactor is Mg(2+). It depends on Mn(2+) as a cofactor.

It is found in the cytoplasm. The catalysed reaction is 2 D-alanine + ATP = D-alanyl-D-alanine + ADP + phosphate + H(+). It functions in the pathway cell wall biogenesis; peptidoglycan biosynthesis. Cell wall formation. The protein is D-alanine--D-alanine ligase of Rickettsia africae (strain ESF-5).